A 300-amino-acid polypeptide reads, in one-letter code: MQTDLSDSSFFNHKSVMTDEIMASLEHYPLIHNNQLKGIDATLGGGGHSYHLLRKYSDLNIIGLDQDPFARKSALKKLDEFKSRIDIRASNFADFVPKEKVSFVIADLGVNSNQLDDPKRGFSFQKDGPLDMRMNPLLDVDAEKLIEVLNEKDLANLIYKYGDERLSRKIARKIKLDLKENGKYSGTKELAYSIAGCFPPKQRYKKIHPATRTFQALRIAVNKEIEVLEKFLQVVPEWLLPGGIISVISFHSLEDRLVKSCFKNDQRLKNLTKKPITPSEEEVELNKRARSGKLRIAQLN.

S-adenosyl-L-methionine contacts are provided by residues 46 to 48 (GGH), Asp65, Phe92, Asp107, and Gln114.

It belongs to the methyltransferase superfamily. RsmH family.

Its subcellular location is the cytoplasm. The catalysed reaction is cytidine(1402) in 16S rRNA + S-adenosyl-L-methionine = N(4)-methylcytidine(1402) in 16S rRNA + S-adenosyl-L-homocysteine + H(+). Its function is as follows. Specifically methylates the N4 position of cytidine in position 1402 (C1402) of 16S rRNA. In Prochlorococcus marinus (strain MIT 9301), this protein is Ribosomal RNA small subunit methyltransferase H.